Consider the following 827-residue polypeptide: Zinc finger protein 438 (827 aa).

Disordered stretches follow at residues 1–31, 117–173, and 193–232; these read MQNS…LQNK, LKLP…LYKP, and ALTN…AKQD. Polar residues-rich tracts occupy residues 16–31 and 150–159; these read NIPS…LQNK and PAQTQMCPQM. The segment covering 217-226 has biased composition (pro residues); the sequence is PATPASPTPE. 3 C2H2-type zinc fingers span residues 506–528, 534–556, and 566–589; these read HRCH…MNTH, YSCR…MKLH, and MCCE…KEVH. The interval 682–723 is disordered; the sequence is FPGSKGTQEELVQHASHDWKRHPERGKPEKVHSSSEESHACP. 2 stretches are compositionally biased toward basic and acidic residues: residues 688 to 699 and 706 to 721; these read TQEELVQHASHD and RGKP…ESHA. The C2H2-type 4 zinc finger occupies 775–798; it reads FNCLLCAEMLGQKEDLLHHWKHQH.

The protein resides in the nucleus. Acts as a transcriptional repressor. The chain is Zinc finger protein 438 (ZNF438) from Pongo abelii (Sumatran orangutan).